We begin with the raw amino-acid sequence, 187 residues long: UPF0340 protein SPJ_0612 (187 aa).

It belongs to the UPF0340 family.

The protein is UPF0340 protein SPJ_0612 of Streptococcus pneumoniae (strain JJA).